A 395-amino-acid polypeptide reads, in one-letter code: MILTLDPQVAGASGDMVLGALIAVGADPNRLEEVVHEVSSLGHEVDVHVHEIQKRGIRAVRVEVDAEGDLRDPDELREAVKTVAENVLEDRWRELPELALKYLLRAEERVHGDLCHLHELGSSDTVVDLVGTAALLEDLNPKASEVLPPNVGSGTVETEHGRLPVPAPAVVEVLSEWDVGIVREGEGELLTPTGAALLRTIDELLPDPPPPYRVKRQGFGAGTKDLPDRPNVLRALICEPGGSGEHVRIVETSVDDVDGEAVGELIEAVLQLEGVHDVEVLHGFGKKGRPRFVIRVVTEDRPGIEREVFRELFRWTGTLGARVYRCTRVTADRRIVDVDGIRVKVSRFEDVHHAKPEWEDVRRKVDRESAPLTRARLVGDLRKRYEGDGEDGAGD.

The protein belongs to the LarC family.

In Methanopyrus kandleri (strain AV19 / DSM 6324 / JCM 9639 / NBRC 100938), this protein is Putative nickel insertion protein.